The primary structure comprises 119 residues: Large ribosomal subunit protein bL20 (119 aa).

It belongs to the bacterial ribosomal protein bL20 family.

Functionally, binds directly to 23S ribosomal RNA and is necessary for the in vitro assembly process of the 50S ribosomal subunit. It is not involved in the protein synthesizing functions of that subunit. The sequence is that of Large ribosomal subunit protein bL20 from Dechloromonas aromatica (strain RCB).